Reading from the N-terminus, the 556-residue chain is Oxygen-dependent choline dehydrogenase (556 aa).

4–33 (DYIIIGAGSAGNVLATRLTEDPNTTVLLLE) contributes to the FAD binding site. His-473 acts as the Proton acceptor in catalysis.

The protein belongs to the GMC oxidoreductase family. FAD is required as a cofactor.

The enzyme catalyses choline + A = betaine aldehyde + AH2. It catalyses the reaction betaine aldehyde + NAD(+) + H2O = glycine betaine + NADH + 2 H(+). It functions in the pathway amine and polyamine biosynthesis; betaine biosynthesis via choline pathway; betaine aldehyde from choline (cytochrome c reductase route): step 1/1. Functionally, involved in the biosynthesis of the osmoprotectant glycine betaine. Catalyzes the oxidation of choline to betaine aldehyde and betaine aldehyde to glycine betaine at the same rate. The polypeptide is Oxygen-dependent choline dehydrogenase (Escherichia coli O127:H6 (strain E2348/69 / EPEC)).